Reading from the N-terminus, the 537-residue chain is Beta-arabinofuranosyltransferase RAY1 (537 aa).

The short motif at 370–372 (DVD) is the DXD motif element.

Belongs to the glycosyltransferase 77 family.

In terms of biological role, beta-arabinofuranosyltransferase that transfers specifically an arabinosyl residue from UDP-arabinofuranose to the monosaccharide galactose or beta-methyl-galactoside in vitro. Catalyzes the addition of a beta-arabinofuranose residue onto a beta-galactosyl residue of an Yariv-precipitable wall polymer in vivo. In Arabidopsis thaliana (Mouse-ear cress), this protein is Beta-arabinofuranosyltransferase RAY1.